The following is a 642-amino-acid chain: MRNDSPYTPLLNASHNNHRRRELLLLFSGLLLLASIIAFSAYIAQPHADADVSSSSSILSDEATRPTTLSRGVSSGVSEKSNTFLLSGNLVGEGGSFPWNNTMLSWQRTAFHFQPEKNWMNDPNGPLYYKGWYHFFYQYNPNGAVWGDIVWGHAVSRDLIHWLHLPLAMVADQWYDSNGVWTGSATILPDGQVIMLYTGSTNEFVQVQNLAYPADLNDPLLVDWIKYPSNPVLVPPPGILPKDFRDPTTAWLTTEGKWRITIGSKINKTGVALVYDTVDFKTYERKDMLLNAVPGTGMWECVDFFPVSMKSENGLDTSFTGDEVKHVMKVSLDDDRHDYYALGTYDEKKVKFIADDFENDVGIGLRYDYGIFYASKTFYDQKKDRRVLWGWIGESDSEYADVAKGWASVQSIPRIVKLDKKTGSNLLQWPVAEVESLRLRSDEFQNLKVKPGAVVSVDIETATQLDIVAEFEIDKEALEKTAQSNVEYECNTSGGASRRGALGPFGLYVLADNGLSEYTPVYFYVVKGINGKLHTSFCSDQSRSSLANDVHKQIYGSVVPVLEGEKLSLRILVDHSIVESFAQGGRTCITSRVYPTRAIYGAARLFLFNNAIETNVTASLKVWQMNSAFIRPYHPDQKRQTS.

The Cytoplasmic portion of the chain corresponds to Met-1 to Glu-22. A propeptide spans Met-1–Gly-95 (removed in mature form). Residues Leu-23–Ile-43 traverse the membrane as a helical; Signal-anchor for type II membrane protein segment. Over Ala-44–Ser-642 the chain is Lumenal. Residue Asn-100 is glycosylated (N-linked (GlcNAc...) asparagine). Substrate contacts are provided by residues Trp-119–Asp-122, Gln-138, Trp-146, Trp-181–Thr-182, and Arg-245–Asp-246. Residue Asp-122 is part of the active site. Asn-267 is a glycosylation site (N-linked (GlcNAc...) asparagine). Positions 300 and 333 each coordinate substrate. A disulfide bridge connects residues Cys-490 and Cys-538. 2 N-linked (GlcNAc...) asparagine glycosylation sites follow: Asn-491 and Asn-615.

It belongs to the glycosyl hydrolase 32 family. As to quaternary structure, may be present in two forms, a 70 kDa monomer and a heterodimer of the 30 kDa and 38 kDa subunits. The ratio of the levels of the two forms within cells appears to be regulated developmentally.

The protein localises to the membrane. Its subcellular location is the vacuole. It is found in the vacuole lumen. The enzyme catalyses Hydrolysis of terminal non-reducing beta-D-fructofuranoside residues in beta-D-fructofuranosides.. The protein operates within glycan biosynthesis; sucrose metabolism. The polypeptide is Acid beta-fructofuranosidase (VCINV) (Vicia faba (Broad bean)).